A 343-amino-acid chain; its full sequence is 4-hydroxy-2-oxovalerate aldolase (343 aa).

The Pyruvate carboxyltransferase domain occupies 4–254 (PRLTDTTLRD…NPGLDVFSLM (251 aa)). 12 to 13 (RD) serves as a coordination point for substrate. Mn(2+) is bound at residue D13. H16 functions as the Proton acceptor in the catalytic mechanism. Substrate is bound by residues S166 and H193. Positions 193 and 195 each coordinate Mn(2+). Y284 lines the substrate pocket.

Belongs to the 4-hydroxy-2-oxovalerate aldolase family.

The enzyme catalyses (S)-4-hydroxy-2-oxopentanoate = acetaldehyde + pyruvate. The protein is 4-hydroxy-2-oxovalerate aldolase of Chloroflexus aurantiacus (strain ATCC 29364 / DSM 637 / Y-400-fl).